The sequence spans 1082 residues: Putative white-brown complex homolog protein 30 (1082 aa).

2 helical membrane-spanning segments follow: residues 12–32 and 292–312; these read HIFL…SLDG and NIHA…IMVY. Basic and acidic residues predominate over residues 329–348; it reads SREAAARHAKETTQARERWK. The tract at residues 329 to 437 is disordered; the sequence is SREAAARHAK…QAPKGKQLHT (109 aa). The ABC transporter domain maps to 484-726; that stretch reads VAFKDLTLTL…FADIGITVPD (243 aa). 518–525 contacts ATP; the sequence is GPSGAGKT. The ABC transmembrane type-2 domain maps to 832–1029; the sequence is RQYRYFVGRV…TLEAFVLSNA (198 aa). The next 5 helical transmembrane spans lie at 853–873, 877–897, 958–978, 979–999, and 1054–1074; these read ALDF…AKVN, IDTL…KISA, YIVL…FAIL, YSPS…TLIA, and WILC…IAYF.

The protein belongs to the ABC transporter superfamily. ABCG family. Eye pigment precursor importer (TC 3.A.1.204) subfamily.

It localises to the membrane. The protein is Putative white-brown complex homolog protein 30 (WBC30) of Arabidopsis thaliana (Mouse-ear cress).